The chain runs to 30 residues: Thylakoid lumenal 13.3 kDa protein (30 aa).

Its subcellular location is the plastid. It localises to the chloroplast thylakoid lumen. The protein is Thylakoid lumenal 13.3 kDa protein of Spinacia oleracea (Spinach).